The primary structure comprises 208 residues: Small ribosomal subunit protein uS4 (208 aa).

Residues 98–163 (RRLDNVVYRL…KPRFIEIKEK (66 aa)) form the S4 RNA-binding domain.

The protein belongs to the universal ribosomal protein uS4 family. As to quaternary structure, part of the 30S ribosomal subunit. Contacts protein S5. The interaction surface between S4 and S5 is involved in control of translational fidelity.

Its function is as follows. One of the primary rRNA binding proteins, it binds directly to 16S rRNA where it nucleates assembly of the body of the 30S subunit. Functionally, with S5 and S12 plays an important role in translational accuracy. In Caldicellulosiruptor saccharolyticus (strain ATCC 43494 / DSM 8903 / Tp8T 6331), this protein is Small ribosomal subunit protein uS4.